The primary structure comprises 732 residues: MAP7 domain-containing protein 2 (732 aa).

The residue at position 1 (M1) is an N-acetylmethionine. The segment covering 1-10 (MERGGGGSGT) has biased composition (gly residues). 5 disordered regions span residues 1–64 (MERG…RREE), 95–123 (WRKL…LREE), 157–186 (PGGH…KRLS), 210–244 (GPLN…GKEA), and 279–509 (EFSG…KQKE). Residues 49–64 (LKSDERQRLAKERREE) show a composition bias toward basic and acidic residues. Residues 51 to 146 (SDERQRLAKE…RTQQLELKKK (96 aa)) are a coiled coil. The span at 329–345 (MPKRKAEKEKSNKEREG) shows a compositional bias: basic and acidic residues. The span at 347–357 (LAQQAAGPQGE) shows a compositional bias: low complexity. A compositionally biased stretch (basic and acidic residues) spans 359–374 (ALEKHVVDKHASEKHA). Residues 375–386 (AAAGGKAENSAA) are compositionally biased toward low complexity. The span at 404-509 (LAEKRRQARL…EKAMIEKQKE (106 aa)) shows a compositional bias: basic and acidic residues.

It belongs to the MAP7 family. In terms of assembly, interacts (via N-terminus) with microtubules; facilitates microtubule stabilization. Interacts with kinesin-1 family members, KIF5A, KIF5B and KIF5C.

It is found in the cytoplasm. The protein resides in the cytoskeleton. Its subcellular location is the microtubule organizing center. It localises to the centrosome. The protein localises to the midbody. It is found in the cell projection. The protein resides in the neuron projection. Its subcellular location is the axon. Functionally, microtubule-stabilizing protein that plays a role in the control of cell motility and neurite outgrowth via direct binding to the microtubule. Acts as a critical cofactor for kinesin transport. In the proximal axon, regulates kinesin-1 family members, KIF5A, KIF5B and KIF5C recruitment to microtubules and contributes to kinesin-1-mediated transport in the axons. The polypeptide is MAP7 domain-containing protein 2 (MAP7D2) (Homo sapiens (Human)).